Reading from the N-terminus, the 55-residue chain is Ferredoxin (55 aa).

2 consecutive 4Fe-4S ferredoxin-type domains span residues 2–27 and 28–55; these read FVIN…TQGD and TQFV…PNQE. Cysteine 8, cysteine 11, cysteine 14, cysteine 18, cysteine 37, cysteine 40, cysteine 43, and cysteine 47 together coordinate [4Fe-4S] cluster.

[4Fe-4S] cluster is required as a cofactor.

Functionally, ferredoxins are iron-sulfur proteins that transfer electrons in a wide variety of metabolic reactions. This Clostridium butyricum protein is Ferredoxin.